The sequence spans 185 residues: Elongation factor P (185 aa).

Belongs to the elongation factor P family.

Its subcellular location is the cytoplasm. The protein operates within protein biosynthesis; polypeptide chain elongation. Its function is as follows. Involved in peptide bond synthesis. Stimulates efficient translation and peptide-bond synthesis on native or reconstituted 70S ribosomes in vitro. Probably functions indirectly by altering the affinity of the ribosome for aminoacyl-tRNA, thus increasing their reactivity as acceptors for peptidyl transferase. The sequence is that of Elongation factor P from Desulfitobacterium hafniense (strain Y51).